The following is a 63-amino-acid chain: Cecropin-2 (63 aa).

The N-terminal stretch at Met1 to Thr21 is a signal peptide. The propeptide occupies Glu22–Ala23. Lysine amide is present on Lys62.

This sequence belongs to the cecropin family.

The protein resides in the secreted. In terms of biological role, cecropins have lytic and antibacterial activity against several Gram-positive and Gram-negative bacteria. This is Cecropin-2 (CEC2) from Ceratitis capitata (Mediterranean fruit fly).